The following is a 416-amino-acid chain: Multifunctional CCA protein (416 aa).

The ATP site is built by Gly8 and Arg11. Gly8 and Arg11 together coordinate CTP. Positions 21 and 23 each coordinate Mg(2+). Arg91, Arg137, and Arg140 together coordinate ATP. The CTP site is built by Arg91, Arg137, and Arg140. The HD domain maps to 228 to 329 (TGVHTLMVLA…VKIFDKADFW (102 aa)).

The protein belongs to the tRNA nucleotidyltransferase/poly(A) polymerase family. Bacterial CCA-adding enzyme type 1 subfamily. As to quaternary structure, monomer. Can also form homodimers and oligomers. The cofactor is Mg(2+). Ni(2+) is required as a cofactor.

The catalysed reaction is a tRNA precursor + 2 CTP + ATP = a tRNA with a 3' CCA end + 3 diphosphate. The enzyme catalyses a tRNA with a 3' CCA end + 2 CTP + ATP = a tRNA with a 3' CCACCA end + 3 diphosphate. Functionally, catalyzes the addition and repair of the essential 3'-terminal CCA sequence in tRNAs without using a nucleic acid template. Adds these three nucleotides in the order of C, C, and A to the tRNA nucleotide-73, using CTP and ATP as substrates and producing inorganic pyrophosphate. tRNA 3'-terminal CCA addition is required both for tRNA processing and repair. Also involved in tRNA surveillance by mediating tandem CCA addition to generate a CCACCA at the 3' terminus of unstable tRNAs. While stable tRNAs receive only 3'-terminal CCA, unstable tRNAs are marked with CCACCA and rapidly degraded. The polypeptide is Multifunctional CCA protein (Shewanella baltica (strain OS155 / ATCC BAA-1091)).